We begin with the raw amino-acid sequence, 208 residues long: Putative thymidylate kinase (208 aa).

Residues 12–19 are defective ATP-binding; the sequence is GIDGTGTS.

The protein belongs to the thymidylate kinase family.

The enzyme catalyses dTMP + ATP = dTDP + ADP. This is Putative thymidylate kinase (tmk) from Treponema pallidum (strain Nichols).